We begin with the raw amino-acid sequence, 119 residues long: Non-specific lipid-transfer protein 11 (119 aa).

The signal sequence occupies residues 1-28; the sequence is MRNITTTTRKMLLLVITILLGIAYHGEA. 4 disulfide bridges follow: Cys-31–Cys-78, Cys-41–Cys-55, Cys-56–Cys-101, and Cys-76–Cys-115.

This sequence belongs to the plant LTP family.

Plant non-specific lipid-transfer proteins transfer phospholipids as well as galactolipids across membranes. May play a role in wax or cutin deposition in the cell walls of expanding epidermal cells and certain secretory tissues. This is Non-specific lipid-transfer protein 11 (LTP11) from Arabidopsis thaliana (Mouse-ear cress).